Consider the following 354-residue polypeptide: Heme A synthase (354 aa).

A run of 8 helical transmembrane segments spans residues 21–41 (VAVW…LGGL), 106–126 (VWGR…ALSG), 139–159 (VFLL…SGLV), 171–191 (AHLA…LDIL), 212–232 (MLGL…VAGL), 268–288 (VQFG…VGWF), 304–324 (AVGL…VMVV), and 326–346 (VWLA…CLWA). Residue histidine 272 participates in heme binding. Histidine 332 provides a ligand contact to heme.

It belongs to the COX15/CtaA family. Type 2 subfamily. Interacts with CtaB. Heme b serves as cofactor.

Its subcellular location is the cell membrane. It catalyses the reaction Fe(II)-heme o + 2 A + H2O = Fe(II)-heme a + 2 AH2. The protein operates within porphyrin-containing compound metabolism; heme A biosynthesis; heme A from heme O: step 1/1. Functionally, catalyzes the conversion of heme O to heme A by two successive hydroxylations of the methyl group at C8. The first hydroxylation forms heme I, the second hydroxylation results in an unstable dihydroxymethyl group, which spontaneously dehydrates, resulting in the formyl group of heme A. The polypeptide is Heme A synthase (Paramagnetospirillum magneticum (strain ATCC 700264 / AMB-1) (Magnetospirillum magneticum)).